A 418-amino-acid chain; its full sequence is UDP-N-acetylglucosamine 1-carboxyvinyltransferase (418 aa).

Position 22–23 (22–23 (KN)) interacts with phosphoenolpyruvate. Arginine 93 is a UDP-N-acetyl-alpha-D-glucosamine binding site. The active-site Proton donor is the cysteine 117. At cysteine 117 the chain carries 2-(S-cysteinyl)pyruvic acid O-phosphothioketal. UDP-N-acetyl-alpha-D-glucosamine is bound by residues aspartate 305 and valine 327.

It belongs to the EPSP synthase family. MurA subfamily.

The protein localises to the cytoplasm. The enzyme catalyses phosphoenolpyruvate + UDP-N-acetyl-alpha-D-glucosamine = UDP-N-acetyl-3-O-(1-carboxyvinyl)-alpha-D-glucosamine + phosphate. Its pathway is cell wall biogenesis; peptidoglycan biosynthesis. Functionally, cell wall formation. Adds enolpyruvyl to UDP-N-acetylglucosamine. The chain is UDP-N-acetylglucosamine 1-carboxyvinyltransferase from Alkalilimnicola ehrlichii (strain ATCC BAA-1101 / DSM 17681 / MLHE-1).